Here is a 282-residue protein sequence, read N- to C-terminus: Protein OS-9 homolog (282 aa).

The N-terminal stretch at 1-23 (MRITQILLCLVIVALSSSSHVWS) is a signal peptide. Asn94 carries N-linked (GlcNAc...) asparagine glycosylation. In terms of domain architecture, MRH spans 120–239 (EKCLFRQEGW…TVQCPTLCKH (120 aa)). Cys122 and Cys135 form a disulfide bridge. 3 residues coordinate a mannooligosaccharide derivative: Trp129, Trp130, and Gln142. N-linked (GlcNAc...) asparagine glycosylation is found at Asn169 and Asn190. Cystine bridges form between Cys194-Cys225 and Cys209-Cys237. The a mannooligosaccharide derivative site is built by Asp195, Arg201, Glu221, and Tyr227. A compositionally biased stretch (basic and acidic residues) spans 262-276 (DATRNKEEQAVDESP). The interval 262–282 (DATRNKEEQAVDESPKMIADS) is disordered.

Belongs to the OS-9 family. Interacts with HRD3A.

It is found in the endoplasmic reticulum. Its function is as follows. Lectin which functions in endoplasmic reticulum (ER) quality control and ER-associated degradation (ERAD). May bind terminally misfolded non-glycosylated proteins as well as improperly folded glycoproteins, retain them in the ER, and possibly transfer them to the ubiquitination machinery and promote their degradation. Targets the misfolded LRR receptor kinase BRI1 and the misfolded receptor-like kinase EFR. The protein is Protein OS-9 homolog of Arabidopsis thaliana (Mouse-ear cress).